A 233-amino-acid polypeptide reads, in one-letter code: Large ribosomal subunit protein uL1 (233 aa).

This sequence belongs to the universal ribosomal protein uL1 family. In terms of assembly, part of the 50S ribosomal subunit.

Its function is as follows. Binds directly to 23S rRNA. The L1 stalk is quite mobile in the ribosome, and is involved in E site tRNA release. In terms of biological role, protein L1 is also a translational repressor protein, it controls the translation of the L11 operon by binding to its mRNA. The sequence is that of Large ribosomal subunit protein uL1 from Psychrobacter arcticus (strain DSM 17307 / VKM B-2377 / 273-4).